Consider the following 137-residue polypeptide: ATP synthase epsilon chain (137 aa).

This sequence belongs to the ATPase epsilon chain family. In terms of assembly, F-type ATPases have 2 components, CF(1) - the catalytic core - and CF(0) - the membrane proton channel. CF(1) has five subunits: alpha(3), beta(3), gamma(1), delta(1), epsilon(1). CF(0) has three main subunits: a, b and c.

It is found in the cell inner membrane. Its function is as follows. Produces ATP from ADP in the presence of a proton gradient across the membrane. The polypeptide is ATP synthase epsilon chain (Magnetococcus marinus (strain ATCC BAA-1437 / JCM 17883 / MC-1)).